The sequence spans 499 residues: Putative hydrolase YuaR (499 aa).

The signal sequence occupies residues 1–26; that stretch reads MRVIMKPLRRTLVFFIFSVFLCGTVS. Positions 94–393 constitute an AB hydrolase-1 domain; sequence GSVIIISGGP…DAFPAVNFER (300 aa). The active-site Nucleophile is S207. D433 is an active-site residue. The active-site Proton donor is the H460.

Belongs to the peptidase S33 family.

This Escherichia coli (strain K12) protein is Putative hydrolase YuaR (yuaR).